A 67-amino-acid polypeptide reads, in one-letter code: Large ribosomal subunit protein uL29 (67 aa).

It belongs to the universal ribosomal protein uL29 family.

The protein is Large ribosomal subunit protein uL29 of Polaromonas naphthalenivorans (strain CJ2).